A 197-amino-acid chain; its full sequence is Small ribosomal subunit protein uS5 (197 aa).

Residues 1–27 (MAEREQRGGRDQRGGGRERKEREERDS) form a disordered region. The region spanning 29–92 (FVDKLVHINR…ESAKRNLTRV (64 aa)) is the S5 DRBM domain.

The protein belongs to the universal ribosomal protein uS5 family. In terms of assembly, part of the 30S ribosomal subunit. Contacts proteins S4 and S8.

Functionally, with S4 and S12 plays an important role in translational accuracy. Its function is as follows. Located at the back of the 30S subunit body where it stabilizes the conformation of the head with respect to the body. This Bradyrhizobium diazoefficiens (strain JCM 10833 / BCRC 13528 / IAM 13628 / NBRC 14792 / USDA 110) protein is Small ribosomal subunit protein uS5.